We begin with the raw amino-acid sequence, 348 residues long: MSDQISIIAPDDWHVHLRDGEMLNQVVAHTARRFQRAIVMPNLRPPVTTVAAAQAYRDRIQAACPADLEFTPLMTAYLTDSIAPAELETGFREGVFAAAKLYPANATTNSAAGVTDLLQIDPVLETMARIGMPLLIHGEVTDPEIDIFDREAAFIERHLEPLRERHPELKVVLEHITTEQAVQYVSSADRHLAATITPHHLHINRNAMFAGGLRSDFYCLPVAKRECHRQALRRAATSGDPSFFLGTDTAPHERSSKESACGCAGIFNAPFALESYAQVFDQEGALEHFEAFTSLNGPAFYKLPANTHRITLQRRDHLVPELVNGLVPFHAGEILSWAVANAPDQVQL.

Zn(2+) is bound by residues H14 and H16. Residues 16–18 (HLR) and N42 each bind substrate. Zn(2+) contacts are provided by K100, H137, and H175. K100 bears the N6-carboxylysine mark. A substrate-binding site is contributed by H137. L220 serves as a coordination point for substrate. Residue D248 coordinates Zn(2+). The active site involves D248. 2 residues coordinate substrate: H252 and A264.

This sequence belongs to the metallo-dependent hydrolases superfamily. DHOase family. Class II DHOase subfamily. Homodimer. It depends on Zn(2+) as a cofactor.

It carries out the reaction (S)-dihydroorotate + H2O = N-carbamoyl-L-aspartate + H(+). It participates in pyrimidine metabolism; UMP biosynthesis via de novo pathway; (S)-dihydroorotate from bicarbonate: step 3/3. Catalyzes the reversible cyclization of carbamoyl aspartate to dihydroorotate. The chain is Dihydroorotase from Synechococcus sp. (strain CC9605).